A 198-amino-acid polypeptide reads, in one-letter code: Recombination protein RecR (198 aa).

The C4-type zinc finger occupies 57-72 (CSICGNLTESDPCAIC). In terms of domain architecture, Toprim spans 80 to 175 (TTILVVEESK…KVTRLARGLA (96 aa)).

This sequence belongs to the RecR family.

May play a role in DNA repair. It seems to be involved in an RecBC-independent recombinational process of DNA repair. It may act with RecF and RecO. This chain is Recombination protein RecR, found in Lactococcus lactis subsp. cremoris (strain MG1363).